We begin with the raw amino-acid sequence, 323 residues long: Ribonuclease Z (323 aa).

Positions 62, 64, 66, 67, 140, 211, and 270 each coordinate Zn(2+). Catalysis depends on D66, which acts as the Proton acceptor.

The protein belongs to the RNase Z family. In terms of assembly, homodimer. The cofactor is Zn(2+).

It carries out the reaction Endonucleolytic cleavage of RNA, removing extra 3' nucleotides from tRNA precursor, generating 3' termini of tRNAs. A 3'-hydroxy group is left at the tRNA terminus and a 5'-phosphoryl group is left at the trailer molecule.. Its function is as follows. Zinc phosphodiesterase, which displays some tRNA 3'-processing endonuclease activity. Probably involved in tRNA maturation, by removing a 3'-trailer from precursor tRNA. The sequence is that of Ribonuclease Z from Marinobacter nauticus (strain ATCC 700491 / DSM 11845 / VT8) (Marinobacter aquaeolei).